A 243-amino-acid polypeptide reads, in one-letter code: Adenosylcobinamide-GDP ribazoletransferase (243 aa).

A run of 5 helical transmembrane segments spans residues 31 to 51 (LLFYPLVGVVFGTLLLGFNAL), 55 to 75 (APLLLHAALLLSAWVLLSGGL), 109 to 129 (IAVVTLVVVLLLKFAAIVALI), 135 to 155 (IGLLLAPLIGRSAMLALFLGT), and 188 to 208 (VVLAGWSGIAALLVCAVCFYW).

Belongs to the CobS family. Mg(2+) serves as cofactor.

It localises to the cell inner membrane. The enzyme catalyses alpha-ribazole + adenosylcob(III)inamide-GDP = adenosylcob(III)alamin + GMP + H(+). It catalyses the reaction alpha-ribazole 5'-phosphate + adenosylcob(III)inamide-GDP = adenosylcob(III)alamin 5'-phosphate + GMP + H(+). It functions in the pathway cofactor biosynthesis; adenosylcobalamin biosynthesis; adenosylcobalamin from cob(II)yrinate a,c-diamide: step 7/7. Its function is as follows. Joins adenosylcobinamide-GDP and alpha-ribazole to generate adenosylcobalamin (Ado-cobalamin). Also synthesizes adenosylcobalamin 5'-phosphate from adenosylcobinamide-GDP and alpha-ribazole 5'-phosphate. The protein is Adenosylcobinamide-GDP ribazoletransferase of Pseudomonas syringae pv. tomato (strain ATCC BAA-871 / DC3000).